A 343-amino-acid chain; its full sequence is Lumican (343 aa).

The first 18 residues, 1 to 18 (MTLNSLPIFLVLISGIFC), serve as a signal peptide directing secretion. Q19 is modified (pyrrolidone carboxylic acid). Sulfotyrosine is present on residues Y20 and Y22. The region spanning 31–69 (DPFGPSTAVCAPECNCPLSYPTAMYCDNLKLKTIPIVPS) is the LRRNT domain. 8 LRR repeats span residues 70–91 (GIKYLYLRNNMIESIEENTFDN), 94–117 (DLQWLILDHNHLENSKIKGRVFSK), 120–140 (NLKKLHINYNNLTEAVGPLPK), 141–162 (TLDDLQLSHNKITKVNPGALEG), 165–186 (NLTVIHLQNNQLKADSISGAFK), 190–211 (SLLYLDLSFNQLTKLPTGLPHS), 212–232 (LLMLYFDNNQISNIPDEYFQG), and 235–255 (TLQYLRLSHNKLTDSGIPGNV). N-linked (GlcNAc...) (keratan sulfate) asparagine glycosylation occurs at N91. N-linked (GlcNAc...) (keratan sulfate) asparagine glycosylation occurs at N130. N-linked (GlcNAc...) (keratan sulfate) asparagine glycosylation occurs at N165. The N-linked (GlcNAc...) (keratan sulfate) asparagine glycan is linked to N257. LRR repeat units follow at residues 260–281 (SLVELDLSFNQLKSIPTVSENL), 282–301 (ENFYLQVNKINKFPLSSFCK), and 310–330 (KITHLRLDGNNLTRADLPQEM). A disulfide bond links C300 and C333. A glycan (N-linked (GlcNAc...) asparagine) is linked at N320.

Belongs to the small leucine-rich proteoglycan (SLRP) family. SLRP class II subfamily. In terms of assembly, binds to laminin. In terms of processing, contains keratan sulfate.

It localises to the secreted. The protein localises to the extracellular space. It is found in the extracellular matrix. In Coturnix japonica (Japanese quail), this protein is Lumican (LUM).